Reading from the N-terminus, the 251-residue chain is 1-(5-phosphoribosyl)-5-[(5-phosphoribosylamino)methylideneamino] imidazole-4-carboxamide isomerase (251 aa).

Catalysis depends on aspartate 8, which acts as the Proton acceptor. The active-site Proton donor is the aspartate 131.

It belongs to the HisA/HisF family.

It localises to the cytoplasm. It catalyses the reaction 1-(5-phospho-beta-D-ribosyl)-5-[(5-phospho-beta-D-ribosylamino)methylideneamino]imidazole-4-carboxamide = 5-[(5-phospho-1-deoxy-D-ribulos-1-ylimino)methylamino]-1-(5-phospho-beta-D-ribosyl)imidazole-4-carboxamide. It functions in the pathway amino-acid biosynthesis; L-histidine biosynthesis; L-histidine from 5-phospho-alpha-D-ribose 1-diphosphate: step 4/9. The protein is 1-(5-phosphoribosyl)-5-[(5-phosphoribosylamino)methylideneamino] imidazole-4-carboxamide isomerase of Burkholderia cenocepacia (strain ATCC BAA-245 / DSM 16553 / LMG 16656 / NCTC 13227 / J2315 / CF5610) (Burkholderia cepacia (strain J2315)).